The following is a 120-amino-acid chain: Large ribosomal subunit protein bL20 (120 aa).

Belongs to the bacterial ribosomal protein bL20 family.

Binds directly to 23S ribosomal RNA and is necessary for the in vitro assembly process of the 50S ribosomal subunit. It is not involved in the protein synthesizing functions of that subunit. In Methylobacillus flagellatus (strain ATCC 51484 / DSM 6875 / VKM B-1610 / KT), this protein is Large ribosomal subunit protein bL20.